Consider the following 398-residue polypeptide: MGIKHCCYILYFTLALVTLLQPVRSAEDVEEFLPSANETRRSLKACEAHNIIDKCWRCKADWANNRQALADCAQGFAKGTYGGKHGDVYTVTSDKDDDVANPKEGTLRFAAAQNRPLWIIFKRNMVIHLNQELVVNSDKTIDGRGVKVNIVNAGLTLMNVKNIIIHNINIHDIKVCPGGMIKSNDGPPILRQQSDGDAINVAGSSQIWIDHCSLSKASDGLLDITLGSSHVTVSNCKFTQHQFVLLLGADDTHYQDKGMLATVAFNMFTDHVDQRMPRCRFGFFQVVNNNYDRWGTYAIGGSSAPTILSQGNRFFAPDDIIKKNVLARTGTGNAESMSWNWRTDRDLLENGAIFLPSGSDPVLTPEQKAGMIPAEPGEAVLRLTSSAGVLSCHQGAPC.

Positions 1–25 (MGIKHCCYILYFTLALVTLLQPVRS) are cleaved as a signal peptide. An N-linked (GlcNAc...) asparagine glycan is attached at Asn37. A disulfide bridge links Cys55 with Cys72. The Ca(2+) site is built by Asp195, Asp219, and Asp223. Arg275 is a catalytic residue.

It belongs to the polysaccharide lyase 1 family. Amb a subfamily. Monomer. The cofactor is Ca(2+). The N-terminus is blocked. Pollen and flowers.

It catalyses the reaction Eliminative cleavage of (1-&gt;4)-alpha-D-galacturonan to give oligosaccharides with 4-deoxy-alpha-D-galact-4-enuronosyl groups at their non-reducing ends.. The protein operates within glycan metabolism; pectin degradation; 2-dehydro-3-deoxy-D-gluconate from pectin: step 2/5. In terms of biological role, has pectate lyase activity. This is Pectate lyase 1 from Ambrosia artemisiifolia (Common ragweed).